The primary structure comprises 159 residues: Eukaryotic translation initiation factor 5A (159 aa).

Positions 1–12 (MSDEEHQFESKA) are enriched in basic and acidic residues. The interval 1–23 (MSDEEHQFESKADAGASKTYPQQ) is disordered. Position 52 is a hypusine (lysine 52).

It belongs to the eIF-5A family. Post-translationally, lys-52 undergoes hypusination, a unique post-translational modification that consists in the addition of a butylamino group from spermidine to lysine side chain, leading to the formation of the unusual amino acid hypusine. eIF-5As are the only known proteins to undergo this modification, which is essential for their function.

Its function is as follows. Translation factor that promotes translation elongation and termination, particularly upon ribosome stalling at specific amino acid sequence contexts. Binds between the exit (E) and peptidyl (P) site of the ribosome and promotes rescue of stalled ribosome: specifically required for efficient translation of polyproline-containing peptides as well as other motifs that stall the ribosome. Acts as a ribosome quality control (RQC) cofactor by joining the RQC complex to facilitate peptidyl transfer during CAT tailing step. The chain is Eukaryotic translation initiation factor 5A (EIFSV1) from Senecio vernalis (Spring groundsel).